Reading from the N-terminus, the 395-residue chain is Flap endonuclease 1 (395 aa).

The tract at residues 1–108 is N-domain; sequence MGILGLSKLL…DELETRRQKA (108 aa). Position 34 (D34) interacts with Mg(2+). R74 contributes to the DNA binding site. D90, E162, E164, D183, and D185 together coordinate Mg(2+). The segment at 126–257 is I-domain; the sequence is MMEKMSKRTV…QRAWEGIQRY (132 aa). E162 serves as a coordination point for DNA. DNA is bound by residues G235 and D237. D237 contacts Mg(2+). Residues 340–348 form an interaction with PCNA region; it reads TQGRLDNFF.

This sequence belongs to the XPG/RAD2 endonuclease family. FEN1 subfamily. As to quaternary structure, interacts with PCNA. Three molecules of FEN1 bind to one PCNA trimer with each molecule binding to one PCNA monomer. PCNA stimulates the nuclease activity without altering cleavage specificity. Mg(2+) is required as a cofactor. In terms of processing, phosphorylated. Phosphorylation upon DNA damage induces relocalization to the nuclear plasma.

Its subcellular location is the nucleus. The protein resides in the nucleolus. It localises to the nucleoplasm. It is found in the mitochondrion. Its function is as follows. Structure-specific nuclease with 5'-flap endonuclease and 5'-3' exonuclease activities involved in DNA replication and repair. During DNA replication, cleaves the 5'-overhanging flap structure that is generated by displacement synthesis when DNA polymerase encounters the 5'-end of a downstream Okazaki fragment. It enters the flap from the 5'-end and then tracks to cleave the flap base, leaving a nick for ligation. Also involved in the long patch base excision repair (LP-BER) pathway, by cleaving within the apurinic/apyrimidinic (AP) site-terminated flap. Acts as a genome stabilization factor that prevents flaps from equilibrating into structures that lead to duplications and deletions. Also possesses 5'-3' exonuclease activity on nicked or gapped double-stranded DNA, and exhibits RNase H activity. Also involved in replication and repair of rDNA and in repairing mitochondrial DNA. The chain is Flap endonuclease 1 from Leishmania braziliensis.